Reading from the N-terminus, the 196-residue chain is Large ribosomal subunit protein eL15 (196 aa).

The tract at residues 159–196 (RAYRGRTSAGQRGRGQQKRGKGTEHTRPSIRANDKRGK) is disordered. Over residues 179-196 (KGTEHTRPSIRANDKRGK) the composition is skewed to basic and acidic residues.

Belongs to the eukaryotic ribosomal protein eL15 family.

In Natronomonas pharaonis (strain ATCC 35678 / DSM 2160 / CIP 103997 / JCM 8858 / NBRC 14720 / NCIMB 2260 / Gabara) (Halobacterium pharaonis), this protein is Large ribosomal subunit protein eL15.